The following is a 1129-amino-acid chain: Protein TPR1 (1129 aa).

Residues 4–36 (LSRELVFLILQFLDEEKFKETVHKLEQESGFFF) enclose the LisH domain. In terms of domain architecture, CTLH spans 34 to 92 (FFFNMKYFEEKVHAGEWDEVEKYLSGFTKVDDNRYSMKIFFEIRKQKYLEALDRHDRAK). 11 WD repeats span residues 337 to 377 (SQGS…RLFS), 398 to 437 (ESSI…ETRQ), 443 to 485 (AHSG…FSFE), 487 to 527 (HEAP…SRVD), 579 to 618 (KKSA…MLSS), 623 to 662 (GGLP…RTLR), 762 to 801 (DQAS…QNPS), 829 to 867 (NPED…VMTT), 870 to 910 (PPPP…VKTR), 913 to 952 (GHQR…KKKS), and 1005 to 1044 (ALSA…LRCR). The disordered stretch occupies residues 1092–1129 (LESEGKWGTTPPTENGVPNGRTSTSSATSNPAADQIQR). Over residues 1113-1129 (TSTSSATSNPAADQIQR) the composition is skewed to low complexity.

In terms of assembly, tetramer. Interacts with D53. Interacts with WOX1. Interacts with MOF1. In terms of tissue distribution, expressed in panicles, stems, leaves, spikelets and seed endosperm.

Its function is as follows. Probable downstream regulator of strigolactones signaling. This is Protein TPR1 from Oryza sativa subsp. japonica (Rice).